Consider the following 311-residue polypeptide: 4-hydroxy-3-methylbut-2-enyl diphosphate reductase (311 aa).

A [4Fe-4S] cluster-binding site is contributed by Cys-14. The (2E)-4-hydroxy-3-methylbut-2-enyl diphosphate site is built by His-43 and His-76. Dimethylallyl diphosphate contacts are provided by His-43 and His-76. Positions 43 and 76 each coordinate isopentenyl diphosphate. A [4Fe-4S] cluster-binding site is contributed by Cys-98. His-126 is a (2E)-4-hydroxy-3-methylbut-2-enyl diphosphate binding site. His-126 contacts dimethylallyl diphosphate. Isopentenyl diphosphate is bound at residue His-126. Glu-128 serves as the catalytic Proton donor. (2E)-4-hydroxy-3-methylbut-2-enyl diphosphate is bound at residue Thr-166. A [4Fe-4S] cluster-binding site is contributed by Cys-196. 4 residues coordinate (2E)-4-hydroxy-3-methylbut-2-enyl diphosphate: Ser-224, Ser-225, Asn-226, and Ser-268. Residues Ser-224, Ser-225, Asn-226, and Ser-268 each contribute to the dimethylallyl diphosphate site. Positions 224, 225, 226, and 268 each coordinate isopentenyl diphosphate.

Belongs to the IspH family. It depends on [4Fe-4S] cluster as a cofactor.

It carries out the reaction isopentenyl diphosphate + 2 oxidized [2Fe-2S]-[ferredoxin] + H2O = (2E)-4-hydroxy-3-methylbut-2-enyl diphosphate + 2 reduced [2Fe-2S]-[ferredoxin] + 2 H(+). It catalyses the reaction dimethylallyl diphosphate + 2 oxidized [2Fe-2S]-[ferredoxin] + H2O = (2E)-4-hydroxy-3-methylbut-2-enyl diphosphate + 2 reduced [2Fe-2S]-[ferredoxin] + 2 H(+). Its pathway is isoprenoid biosynthesis; dimethylallyl diphosphate biosynthesis; dimethylallyl diphosphate from (2E)-4-hydroxy-3-methylbutenyl diphosphate: step 1/1. It functions in the pathway isoprenoid biosynthesis; isopentenyl diphosphate biosynthesis via DXP pathway; isopentenyl diphosphate from 1-deoxy-D-xylulose 5-phosphate: step 6/6. In terms of biological role, catalyzes the conversion of 1-hydroxy-2-methyl-2-(E)-butenyl 4-diphosphate (HMBPP) into a mixture of isopentenyl diphosphate (IPP) and dimethylallyl diphosphate (DMAPP). Acts in the terminal step of the DOXP/MEP pathway for isoprenoid precursor biosynthesis. This chain is 4-hydroxy-3-methylbut-2-enyl diphosphate reductase, found in Chromobacterium violaceum (strain ATCC 12472 / DSM 30191 / JCM 1249 / CCUG 213 / NBRC 12614 / NCIMB 9131 / NCTC 9757 / MK).